The primary structure comprises 542 residues: CTP synthase (542 aa).

Residues 1 to 265 (MARYVFITGG…DSEVLSAFGI (265 aa)) are amidoligase domain. S13 lines the CTP pocket. S13 contributes to the UTP binding site. 14 to 19 (SLGKGI) contacts ATP. Position 54 (Y54) interacts with L-glutamine. D71 serves as a coordination point for ATP. 2 residues coordinate Mg(2+): D71 and E139. CTP contacts are provided by residues 146–148 (DIE), 186–191 (KTKPTQ), and K222. UTP is bound by residues 186–191 (KTKPTQ) and K222. The 251-residue stretch at 291–541 (TIAVVGKYTG…IEAAIEQSRL (251 aa)) folds into the Glutamine amidotransferase type-1 domain. Position 353 (G353) interacts with L-glutamine. The active-site Nucleophile; for glutamine hydrolysis is the C380. Residues 381–384 (FGMQ), E404, and R469 contribute to the L-glutamine site. Residues H514 and E516 contribute to the active site.

It belongs to the CTP synthase family. As to quaternary structure, homotetramer.

It catalyses the reaction UTP + L-glutamine + ATP + H2O = CTP + L-glutamate + ADP + phosphate + 2 H(+). The catalysed reaction is L-glutamine + H2O = L-glutamate + NH4(+). It carries out the reaction UTP + NH4(+) + ATP = CTP + ADP + phosphate + 2 H(+). The protein operates within pyrimidine metabolism; CTP biosynthesis via de novo pathway; CTP from UDP: step 2/2. With respect to regulation, allosterically activated by GTP, when glutamine is the substrate; GTP has no effect on the reaction when ammonia is the substrate. The allosteric effector GTP functions by stabilizing the protein conformation that binds the tetrahedral intermediate(s) formed during glutamine hydrolysis. Inhibited by the product CTP, via allosteric rather than competitive inhibition. Catalyzes the ATP-dependent amination of UTP to CTP with either L-glutamine or ammonia as the source of nitrogen. Regulates intracellular CTP levels through interactions with the four ribonucleotide triphosphates. The sequence is that of CTP synthase from Brucella suis (strain ATCC 23445 / NCTC 10510).